The primary structure comprises 262 residues: Virulence regulon transcriptional activator VirF (262 aa).

One can recognise an HTH araC/xylS-type domain in the interval 161 to 258; sequence DQIRKIVEKN…GITPKKFYLY (98 aa). DNA-binding regions (H-T-H motif) lie at residues 178–199 and 225–248; these read SDIS…ESEK and INDV…NEYY.

Homodimer.

Functionally, primary regulator of plasmid-encoded virulence genes. Activates the transcription of icsA (virG) and of virB, which is an activator of the ipaABCD virulence regulon. This is Virulence regulon transcriptional activator VirF (virF) from Shigella dysenteriae.